A 241-amino-acid chain; its full sequence is Small ribosomal subunit protein uS3 (241 aa).

One can recognise a KH type-2 domain in the interval 39–109 (IRQYITKNLS…QIRINVIEVQ (71 aa)). Positions 214 to 241 (EEIPMPVPSQTPRRQRRRQQFEDRSGEE) are disordered. The segment covering 232 to 241 (QQFEDRSGEE) has biased composition (basic and acidic residues).

The protein belongs to the universal ribosomal protein uS3 family. As to quaternary structure, part of the 30S ribosomal subunit. Forms a tight complex with proteins S10 and S14.

Binds the lower part of the 30S subunit head. Binds mRNA in the 70S ribosome, positioning it for translation. This chain is Small ribosomal subunit protein uS3, found in Rippkaea orientalis (strain PCC 8801 / RF-1) (Cyanothece sp. (strain PCC 8801)).